Consider the following 361-residue polypeptide: Phosphoserine aminotransferase (361 aa).

An L-glutamate-binding site is contributed by arginine 43. Pyridoxal 5'-phosphate is bound by residues 77–78 (AS), tryptophan 103, threonine 153, aspartate 173, and glutamine 196. An N6-(pyridoxal phosphate)lysine modification is found at lysine 197. 238–239 (NT) is a binding site for pyridoxal 5'-phosphate.

The protein belongs to the class-V pyridoxal-phosphate-dependent aminotransferase family. SerC subfamily. Homodimer. Pyridoxal 5'-phosphate is required as a cofactor.

The protein localises to the cytoplasm. It catalyses the reaction O-phospho-L-serine + 2-oxoglutarate = 3-phosphooxypyruvate + L-glutamate. The enzyme catalyses 4-(phosphooxy)-L-threonine + 2-oxoglutarate = (R)-3-hydroxy-2-oxo-4-phosphooxybutanoate + L-glutamate. The protein operates within amino-acid biosynthesis; L-serine biosynthesis; L-serine from 3-phospho-D-glycerate: step 2/3. Its pathway is cofactor biosynthesis; pyridoxine 5'-phosphate biosynthesis; pyridoxine 5'-phosphate from D-erythrose 4-phosphate: step 3/5. Catalyzes the reversible conversion of 3-phosphohydroxypyruvate to phosphoserine and of 3-hydroxy-2-oxo-4-phosphonooxybutanoate to phosphohydroxythreonine. The sequence is that of Phosphoserine aminotransferase from Azotobacter vinelandii (strain DJ / ATCC BAA-1303).